We begin with the raw amino-acid sequence, 257 residues long: Adenosylcobinamide-GDP ribazoletransferase (257 aa).

Helical transmembrane passes span 28-48, 50-70, 110-130, and 199-219; these read FARS…LVAL, LFVP…VYAV, VALA…VEVA, and WPQV…AALV.

Belongs to the CobS family. Requires Mg(2+) as cofactor.

The protein resides in the cell membrane. The enzyme catalyses alpha-ribazole + adenosylcob(III)inamide-GDP = adenosylcob(III)alamin + GMP + H(+). It carries out the reaction alpha-ribazole 5'-phosphate + adenosylcob(III)inamide-GDP = adenosylcob(III)alamin 5'-phosphate + GMP + H(+). It functions in the pathway cofactor biosynthesis; adenosylcobalamin biosynthesis; adenosylcobalamin from cob(II)yrinate a,c-diamide: step 7/7. Functionally, joins adenosylcobinamide-GDP and alpha-ribazole to generate adenosylcobalamin (Ado-cobalamin). Also synthesizes adenosylcobalamin 5'-phosphate from adenosylcobinamide-GDP and alpha-ribazole 5'-phosphate. In Halorubrum lacusprofundi (strain ATCC 49239 / DSM 5036 / JCM 8891 / ACAM 34), this protein is Adenosylcobinamide-GDP ribazoletransferase.